Here is a 1941-residue protein sequence, read N- to C-terminus: MKNIIKYLFIFLCFLIITEATHFRYGTISWAPTTKYNNIKITVNLAFRTGYWGSVAIGQQISHGNIDFGDNTKTGLTMTVTSKDTDNEWFTATWSGIHEYSPQPTAQTKNYIVVYKDCCRISTLLNNGDQYWHISAGIQIDSSNAFPNVNWSPVTNMMPIVRVIANKNNNFRIIANDQNKQTALSYKFTDTWTMDQPPGMTVDSINGNCWFLPTKEGLYSTQIKVTDALGAYVVVDFLLQTYTEVGKCDPTCSNADASCTSNSQCTKCSNTGSNSINTCTNIQSPPEFIIPTPKNGETILFPIDKSSEFYLSCKTPYASRTASITTSSIPTELALTTTSTGQTNSIKYSWSPKTSSIGSYVISALCKDSSGLTSEVRSFTIRIEKPECGNGGIKGGDGKCVCIGNWDTIYQCFECKDGFYGDKCTVLPPCKNGVPNGGVNGDGKCLCNNGWTGSDCSVSNSQSCGSMTSSILSSSNAVSSYLNPIKAQVYLANDKKFDFPLVLSIPSTLSKLDVYLLVDANMNSAATFLNIYNGMDNFISSVKKFAEDTQFGLGIFSDYPSNSITFQPNSNIGSDISSAIREFKPSSYSSSSNGNSLLAATQASSAQVGWNSGSFKVIVIITDIDYQANPTEKSSFTNSLIDKSVVPVVIGFGSPIPNWGASISSNGFGYTVQSAITSGDWSTKAAAGIKAVSSKLVYKSGEMANGKSLVTSLPIGETITQSTQKTVTISLLKPATTNIESPVAKVSVMGYGQTVISINSNRQPTVSNSGFSVDQNSFATFKLTGSDADLNILTFKFTSFLDSTAGIITSSSGVDVSTQTNTFYSSTEVFKFTPKKNYIATSSISFIANDGCVDSTAATITITINRINQAPECQPITINALLNQQVGISLSASDFEDVASKIAIFVSNPSPLTVYGSFNYQDKPITTTTTINNPWQLTFKQIVNPPSAISVGVPFKSRDSASLYSKECLITVNFVHTNEAPISSSLSPVPVNPRDKTTITLTSTDYDSTSATFNIKSFTTGTDGKGTFYICPQLGDCSCTTTQIKLQKNYVSSAVSYSTNIANLGICFSNDQSSQITDYASVTFTSTDNQGLESLPVTVNINVVGTRPNSPPTIISIPKYSVFQDYKDYDKSSKIIDGTDTDQDDYDKSQGVNNLIAVITEKPKKGTLYLKNDGSVASNSPAPMEIYYVPNPGTFGDDTYSYKVIDTLQASSTIATTTVSVIQINHKPSVSADSYSFTSQDVQFEKSLVTSDFDGDQVNCQVIALPNQISMYDSEGILITQVPAKLSKNSYSFRLLDPSLIIPSPFSNVQSQFTVNCLDVTSKTDPFGPLQSDDLIVNVGYIYINTPPKTKTLTVQLDQDTSKAFTFNGDDIETPTSDLKVKIFSLPTNGRLSNQYGYLNGTSISSRTYYLNELTYTPNAGLSNWDTEDNNSPLDKISYAVLDKGGLSSETDLVYFSVRPRNPPIYTGKDEINVLQNTRYPLTIIGEIGNGGSSVAISVVSFTGNGTLYETFNMGSEGTIDRQISSYPVNRSDSLVGSYFYAYKPPHNQYGDDFDTITFVLIDGDLVSKIYTVTVNVIHVNQPPTIKLISYKVLGGSGKEIEFGSNSTVNMNINTMALVKYIGNDIDKDQVGPLGSKVLNIPLTGTIYKFNNETTPLGAIIKDKNLNIERNDDGFYYFVFVPIKGSTGQGYARVPLIVIDDGGLVSPSESVDFNVNNINIPPVITIDKEKRSYSLLTNLTISATKITFDDPDSKNNDVSITISIVGEKDETVVPFSNVSFTVTTGKATCKPDSTLSSITCVGKKSELNKVISKIDIIAKVAGNYRLKVFVDDLGYNSPISIRSSTHLNATDYVTLQISSPEVTTQNSSNKTVLSGAIAGAAAGTALIAAAMWKMLRKAAPPTDAFFDEGAFLGDGVNSNPMYQESKNGGENPLYLASNETL.

The first 20 residues, 1–20 (MKNIIKYLFIFLCFLIITEA), serve as a signal peptide directing secretion. The Extracellular portion of the chain corresponds to 21–1871 (THFRYGTISW…VTTQNSSNKT (1851 aa)). In terms of domain architecture, EGF-like spans 420-457 (YGDKCTVLPPCKNGVPNGGVNGDGKCLCNNGWTGSDCS). Disulfide bonds link C430–C445 and C447–C456. Residues 513 to 696 (DVYLLVDANM…AGIKAVSSKL (184 aa)) enclose the VWFA domain. N-linked (GlcNAc...) asparagine glycosylation is found at N1400, N1505, N1530, N1606, N1652, N1738, N1777, N1848, N1866, and N1869. Residues 1872-1892 (VLSGAIAGAAAGTALIAAAMW) form a helical membrane-spanning segment. The Cytoplasmic segment spans residues 1893–1941 (KMLRKAAPPTDAFFDEGAFLGDGVNSNPMYQESKNGGENPLYLASNETL). The tract at residues 1921-1941 (MYQESKNGGENPLYLASNETL) is disordered.

The protein belongs to the SIB family. In terms of assembly, interacts with talA/talin.

The protein resides in the membrane. Functionally, implicated in cellular adhesion. This is Integrin beta-like protein B (sibB) from Dictyostelium discoideum (Social amoeba).